The chain runs to 218 residues: Adapter protein MecA (218 aa).

The protein belongs to the MecA family. As to quaternary structure, homodimer.

Enables the recognition and targeting of unfolded and aggregated proteins to the ClpC protease or to other proteins involved in proteolysis. The sequence is that of Adapter protein MecA from Exiguobacterium sp. (strain ATCC BAA-1283 / AT1b).